The sequence spans 149 residues: Calmodulin (149 aa).

EF-hand domains follow at residues 8 to 43, 44 to 79, 81 to 116, and 117 to 149; these read EQISEFKEAFSLFDKDGDGTITTKELGTVMRSLGQN, PTEAELQDMINEVDQDGSGTIDFPEFLTLMARKMQD, DSEEEIKEAFRVFDKDGNGFISAAELRHIMTNLGEK, and LTDEEVDEMIREADVDGDGQINYEEFVKMMMSK. Residues D21, D23, D25, T27, E32, D57, D59, S61, T63, E68, D94, D96, N98, and E105 each contribute to the Ca(2+) site. An N6,N6,N6-trimethyllysine modification is found at K116. Residues D130, D132, D134, Q136, and E141 each contribute to the Ca(2+) site.

Belongs to the calmodulin family.

In terms of biological role, calmodulin mediates the control of a large number of enzymes, ion channels and other proteins by Ca(2+). Among the enzymes to be stimulated by the calmodulin-Ca(2+) complex are a number of protein kinases and phosphatases. The protein is Calmodulin of Trypanosoma brucei brucei.